The chain runs to 100 residues: Nucleoid-associated protein HPG27_32 (100 aa).

This sequence belongs to the YbaB/EbfC family. As to quaternary structure, homodimer.

The protein localises to the cytoplasm. It is found in the nucleoid. Functionally, binds to DNA and alters its conformation. May be involved in regulation of gene expression, nucleoid organization and DNA protection. The chain is Nucleoid-associated protein HPG27_32 from Helicobacter pylori (strain G27).